The chain runs to 336 residues: Biotin synthase (336 aa).

The 228-residue stretch at 55-282 folds into the Radical SAM core domain; that stretch reads NRVQLSKLLN…QSHVRLTAGR (228 aa). 3 residues coordinate [4Fe-4S] cluster: Cys-70, Cys-74, and Cys-77. Cys-114, Cys-145, Cys-205, and Arg-277 together coordinate [2Fe-2S] cluster.

The protein belongs to the radical SAM superfamily. Biotin synthase family. Homodimer. [4Fe-4S] cluster serves as cofactor. The cofactor is [2Fe-2S] cluster.

It carries out the reaction (4R,5S)-dethiobiotin + (sulfur carrier)-SH + 2 reduced [2Fe-2S]-[ferredoxin] + 2 S-adenosyl-L-methionine = (sulfur carrier)-H + biotin + 2 5'-deoxyadenosine + 2 L-methionine + 2 oxidized [2Fe-2S]-[ferredoxin]. It functions in the pathway cofactor biosynthesis; biotin biosynthesis; biotin from 7,8-diaminononanoate: step 2/2. Its function is as follows. Catalyzes the conversion of dethiobiotin (DTB) to biotin by the insertion of a sulfur atom into dethiobiotin via a radical-based mechanism. This chain is Biotin synthase, found in Brucella anthropi (strain ATCC 49188 / DSM 6882 / CCUG 24695 / JCM 21032 / LMG 3331 / NBRC 15819 / NCTC 12168 / Alc 37) (Ochrobactrum anthropi).